A 159-amino-acid chain; its full sequence is Ribosome maturation factor RimP (159 aa).

This sequence belongs to the RimP family.

The protein localises to the cytoplasm. In terms of biological role, required for maturation of 30S ribosomal subunits. This is Ribosome maturation factor RimP from Lacticaseibacillus casei (strain BL23) (Lactobacillus casei).